We begin with the raw amino-acid sequence, 404 residues long: MKRIRDLWVRTNLIKKIGIGVVIGLLLGILLPDVTAIGILGQLFVGALKAIAPLLVFALVVQAISHQRSGQQTNMTLIIVLYLLGTFLAALVAVIANYLFPLTLTLNTSVNTELSPPQGIVQVFQTLLLKLVDNPINALATANYIGVLAWALIFGLALKSVPSDFKHLIKTAADVTSQIVVWIINVAPIGIMGLVFSTVSENGISILSDYALLILVLVGTMLFVALVVNPLLAFVLTHQNPYPLVFRCLKDSGLTAFFTRSSAANIPVNLQLCEDLGLSQATYLVSIPLGAMINMGGAAITINVLTLAAVNTFGIQIDFLTALLLSVVAAISACGASGVTGGSLLLIPVACSLFGISSDLAMQVVGVGFIVGVIQDSCETALNSSTDVLFTAIAEKAFWKQKKA.

A run of 9 helical transmembrane segments spans residues 17-37 (IGIGVVIGLLLGILLPDVTAI), 44-64 (FVGALKAIAPLLVFALVVQAI), 75-95 (MTLIIVLYLLGTFLAALVAVI), 138-158 (ALATANYIGVLAWALIFGLAL), 179-199 (IVVWIINVAPIGIMGLVFSTV), 212-232 (LLILVLVGTMLFVALVVNPLL), 287-307 (IPLGAMINMGGAAITINVLTL), 319-339 (FLTALLLSVVAAISACGASGV), and 354-374 (FGISSDLAMQVVGVGFIVGVI).

This sequence belongs to the dicarboxylate/amino acid:cation symporter (DAACS) (TC 2.A.23) family.

It localises to the cell membrane. The enzyme catalyses L-serine(in) + Na(+)(in) = L-serine(out) + Na(+)(out). It catalyses the reaction L-threonine(in) + Na(+)(in) = L-threonine(out) + Na(+)(out). Functionally, involved in the import of serine and threonine into the cell, with the concomitant import of sodium (symport system). The polypeptide is Serine/threonine transporter SstT (Streptococcus equi subsp. zooepidemicus (strain H70)).